Here is a 417-residue protein sequence, read N- to C-terminus: UDP-N-acetylglucosamine 1-carboxyvinyltransferase (417 aa).

22-23 (KN) lines the phosphoenolpyruvate pocket. Residue Arg-93 coordinates UDP-N-acetyl-alpha-D-glucosamine. Cys-117 functions as the Proton donor in the catalytic mechanism. Residue Cys-117 is modified to 2-(S-cysteinyl)pyruvic acid O-phosphothioketal. UDP-N-acetyl-alpha-D-glucosamine-binding positions include 122–126 (RPVDL), Asp-305, and Ile-327.

Belongs to the EPSP synthase family. MurA subfamily.

It is found in the cytoplasm. The catalysed reaction is phosphoenolpyruvate + UDP-N-acetyl-alpha-D-glucosamine = UDP-N-acetyl-3-O-(1-carboxyvinyl)-alpha-D-glucosamine + phosphate. It functions in the pathway cell wall biogenesis; peptidoglycan biosynthesis. Its function is as follows. Cell wall formation. Adds enolpyruvyl to UDP-N-acetylglucosamine. In Thiobacillus denitrificans (strain ATCC 25259 / T1), this protein is UDP-N-acetylglucosamine 1-carboxyvinyltransferase.